We begin with the raw amino-acid sequence, 121 residues long: Basic phospholipase A2 homolog BnSP-7 (121 aa).

7 cysteine pairs are disulfide-bonded: C26-C115, C28-C44, C43-C95, C49-C121, C50-C88, C57-C81, and C75-C86. Positions 105–117 are important for membrane-damaging activities in eukaryotes and bacteria; heparin-binding; it reads KKYRYHLKPFCKK.

Belongs to the phospholipase A2 family. Group II subfamily. K49 sub-subfamily. As to quaternary structure, homodimer; non-covalently linked (probable alternative/compact dimer conformation in solution). As to expression, expressed by the venom gland.

The protein localises to the secreted. With respect to regulation, heparin inhibits the neuromuscular effect, myotoxin activity and edema-inducing effects. Bromophenacyl bromide (BPB) inhibits the neuromuscular effect, the myotoxin activity and edema-inducing effects. In terms of biological role, snake venom phospholipase A2 (PLA2) that lacks enzymatic activity. Is myotoxic and displays edema-inducing activity. Displays bactericidal activity and promotes the blockage of the neuromuscular contraction of the chick biventer cervicis muscle. Also disrupts artificial membranes, and provokes tissue damages characterized by edema, necrosis and inflammation. May act as pro-inflammatory mediators, inducing metalloproteinase and cytokine production from the inflammatory and satellite cells. A model of myotoxic mechanism has been proposed: an apo Lys49-PLA2 is activated by the entrance of a hydrophobic molecule (e.g. fatty acid) at the hydrophobic channel of the protein leading to a reorientation of a monomer. This reorientation causes a transition between 'inactive' to 'active' states, causing alignment of C-terminal and membrane-docking sites (MDoS) side-by-side and putting the membrane-disruption sites (MDiS) in the same plane, exposed to solvent and in a symmetric position for both monomers. The MDoS region stabilizes the toxin on membrane by the interaction of charged residues with phospholipid head groups. Subsequently, the MDiS region destabilizes the membrane with penetration of hydrophobic residues. This insertion causes a disorganization of the membrane, allowing an uncontrolled influx of ions (i.e. calcium and sodium), and eventually triggering irreversible intracellular alterations and cell death. The sequence is that of Basic phospholipase A2 homolog BnSP-7 from Bothrops pauloensis (Neuwied's lancehead).